The following is a 119-amino-acid chain: Large ribosomal subunit protein uL18 (119 aa).

It belongs to the universal ribosomal protein uL18 family. As to quaternary structure, part of the 50S ribosomal subunit; part of the 5S rRNA/L5/L18/L25 subcomplex. Contacts the 5S and 23S rRNAs.

This is one of the proteins that bind and probably mediate the attachment of the 5S RNA into the large ribosomal subunit, where it forms part of the central protuberance. The sequence is that of Large ribosomal subunit protein uL18 from Sorangium cellulosum (strain So ce56) (Polyangium cellulosum (strain So ce56)).